We begin with the raw amino-acid sequence, 880 residues long: Alanine--tRNA ligase (880 aa).

Residues H566, H570, C668, and H672 each contribute to the Zn(2+) site.

This sequence belongs to the class-II aminoacyl-tRNA synthetase family. It depends on Zn(2+) as a cofactor.

It is found in the cytoplasm. It carries out the reaction tRNA(Ala) + L-alanine + ATP = L-alanyl-tRNA(Ala) + AMP + diphosphate. Its function is as follows. Catalyzes the attachment of alanine to tRNA(Ala) in a two-step reaction: alanine is first activated by ATP to form Ala-AMP and then transferred to the acceptor end of tRNA(Ala). Also edits incorrectly charged Ser-tRNA(Ala) and Gly-tRNA(Ala) via its editing domain. In Alkaliphilus oremlandii (strain OhILAs) (Clostridium oremlandii (strain OhILAs)), this protein is Alanine--tRNA ligase.